The chain runs to 591 residues: L-fucose isomerase (591 aa).

Catalysis depends on proton acceptor residues glutamate 337 and aspartate 361. Mn(2+)-binding residues include glutamate 337, aspartate 361, and histidine 528.

The protein belongs to the L-fucose isomerase family. Homohexamer. The cofactor is Mn(2+).

It is found in the cytoplasm. It catalyses the reaction L-fucose = L-fuculose. Its pathway is carbohydrate degradation; L-fucose degradation; L-lactaldehyde and glycerone phosphate from L-fucose: step 1/3. Functionally, converts the aldose L-fucose into the corresponding ketose L-fuculose. The protein is L-fucose isomerase of Escherichia coli (strain SE11).